Here is a 1353-residue protein sequence, read N- to C-terminus: Patatin-like phospholipase domain-containing protein ZK370.4 (1353 aa).

A helical transmembrane segment spans residues isoleucine 12–isoleucine 32. Positions threonine 49–serine 64 are enriched in low complexity. 2 disordered regions span residues threonine 49 to phenylalanine 188 and serine 199 to proline 218. Residues serine 91–serine 123 are compositionally biased toward polar residues. 2 stretches are compositionally biased toward basic residues: residues arginine 126–tyrosine 138 and proline 170–glutamine 184. A nucleoside 3',5'-cyclic phosphate-binding positions include leucine 245 to arginine 372, phenylalanine 444 to arginine 581, and isoleucine 570 to tyrosine 692. In terms of domain architecture, PNPLA spans leucine 942–arginine 1108. The GXGXXG motif lies at glycine 946–glycine 951. Positions glycine 973 to glycine 977 match the GXSXG motif. Catalysis depends on serine 975, which acts as the Nucleophile. Aspartate 1095 functions as the Proton acceptor in the catalytic mechanism. The short motif at aspartate 1095–glycine 1097 is the DGA/G element. 3 disordered regions span residues glutamate 1230–serine 1249, serine 1274–leucine 1293, and tyrosine 1305–serine 1353. Over residues glycine 1328 to glycine 1337 the composition is skewed to low complexity.

Belongs to the NTE family.

Its subcellular location is the membrane. The protein is Patatin-like phospholipase domain-containing protein ZK370.4 of Caenorhabditis elegans.